The chain runs to 128 residues: MRFALTVTGPAYGTQQASSAWQFAQAVLQEGHELACVFFYREGVLNANQLTAPASDEFDLVRAWQSLHDEQGVALHICVAAALRRGVTDEREAQQLALASHNLQPGFTLSGLGALAEAALTCDRMVQF.

Cysteine 78 acts as the Cysteine persulfide intermediate in catalysis.

This sequence belongs to the DsrE/TusD family. As to quaternary structure, heterohexamer, formed by a dimer of trimers. The hexameric TusBCD complex contains 2 copies each of TusB, TusC and TusD. The TusBCD complex interacts with TusE.

The protein localises to the cytoplasm. Functionally, part of a sulfur-relay system required for 2-thiolation of 5-methylaminomethyl-2-thiouridine (mnm(5)s(2)U) at tRNA wobble positions. Accepts sulfur from TusA and transfers it in turn to TusE. The polypeptide is Sulfurtransferase TusD (Klebsiella pneumoniae (strain 342)).